The following is a 628-amino-acid chain: Carbon monoxide dehydrogenase 1 (628 aa).

[4Fe-4S] cluster-binding residues include Cys44, Cys52, Cys53, Cys56, Cys61, and Cys75. Positions 266, 302, 340, 448, 478, and 519 each coordinate [Ni-4Fe-5S] cluster.

This sequence belongs to the Ni-containing carbon monoxide dehydrogenase family. As to quaternary structure, homodimer. [4Fe-4S] cluster is required as a cofactor. The cofactor is [Ni-4Fe-5S] cluster.

It carries out the reaction CO + 2 oxidized [2Fe-2S]-[ferredoxin] + H2O = 2 reduced [2Fe-2S]-[ferredoxin] + CO2 + 2 H(+). Functionally, CODH oxidizes carbon monoxide coupled, via CooF, to the reduction of a hydrogen cation by a hydrogenase (possibly CooH). This chain is Carbon monoxide dehydrogenase 1 (cooS1), found in Methanosarcina mazei (strain ATCC BAA-159 / DSM 3647 / Goe1 / Go1 / JCM 11833 / OCM 88) (Methanosarcina frisia).